A 709-amino-acid chain; its full sequence is Phosphoprotein (709 aa).

An N0 binding region spans residues 1–35 (MDKLELVNDGLNIIDFIQKNQKEIQKTYGRSSIQQ). Positions 53 to 92 (SGESEQVEGGMSKDDGDVERRNLEDLSSTSPTDGTIGKRV) are disordered. Positions 63–76 (MSKDDGDVERRNLE) are enriched in basic and acidic residues. The interaction with host STAT1 stretch occupies residues 110 to 140 (VVTDVVYHDHGGECTGYGFTSSPERGWSDYT). The residue at position 257 (S257) is a Phosphoserine; by host. The disordered stretch occupies residues 265 to 324 (ISPEDEEPSSVGGKPNESIGRTIEGQSIRDNLQAKDNKSTDVPGAGPKDSAVKEEPPQKR). S350 bears the Phosphoserine; by host mark. A disordered region spans residues 384-473 (VQTADRQRPG…VNPVDDNDSL (90 aa)). 2 stretches are compositionally biased toward polar residues: residues 416–426 (GTENVPGSKSG) and 444–456 (NAENVQLNASTAV). The tract at residues 475–580 (DKYIMPSDDF…LVSMMIMIPG (106 aa)) is multimerization.

In terms of assembly, homotetramer. Interacts (via multimerization domain) with polymerase L; this interaction forms the polymerase L-P complex. Interacts (via N-terminus) with N0 (via Ncore); this interaction allows P to chaperon N0 to avoid N polymerization before encapsidation. Interacts (via C-terminus) with N-RNA template (via C-terminus); this interaction positions the polymerase on the template for both transcription and replication. Interacts with host STAT1.

It is found in the virion. The protein localises to the host cytoplasm. Its function is as follows. Essential cofactor of the RNA polymerase L that plays a central role in the transcription and replication by forming the polymerase complex with RNA polymerase L and recruiting L to the genomic N-RNA template for RNA synthesis. Also plays a central role in the encapsidation of nascent RNA chains by forming the encapsidation complex with the nucleocapsid protein N (N-P complex). Acts as a chaperone for newly synthesized free N protein, so-called N0, allowing encapsidation of nascent RNA chains during replication. The nucleoprotein protein N prevents excessive phosphorylation of P, which leads to down-regulation of viral transcription/ replication. Participates, together with N, in the formation of viral factories (viroplasms), which are large inclusions in the host cytoplasm where replication takes place. The polypeptide is Phosphoprotein (P/V/C) (Nipah virus).